The primary structure comprises 65 residues: Large ribosomal subunit protein bL35 (65 aa).

Residues 1–51 form a disordered region; sequence MPKIKTNRGAAKRFRKSASGRVKRGNAFTSHILTHKTRKNKRNLRGTSMVS. Basic residues-rich tracts occupy residues 10 to 24 and 33 to 44; these read AAKRFRKSASGRVKR and LTHKTRKNKRNL.

This sequence belongs to the bacterial ribosomal protein bL35 family.

This chain is Large ribosomal subunit protein bL35, found in Pelobacter propionicus (strain DSM 2379 / NBRC 103807 / OttBd1).